The following is a 551-amino-acid chain: uncharacterized protein (551 aa).

A mitochondrion-targeting transit peptide spans 1-36 (MMALVRDRRAHYVMSIVIRWVHCFSSSLRGTFGTRW). Positions 203-315 (TNILLRKLKE…MDSRDRLREE (113 aa)) form a coiled coil. The tract at residues 354–389 (REASLSPWPKSPPSTTALRPHSATMSVSSAGAQKAK) is disordered. The span at 366–384 (PSTTALRPHSATMSVSSAG) shows a compositional bias: polar residues. Positions 405–439 (KHGLESQIEALKANLENEKKKVERFRKEADRLNKS) form a coiled coil. A disordered region spans residues 519 to 551 (LQLSPKGKLSESPKEESLEEPSMRQSSPAETVD). Residues 541-551 (MRQSSPAETVD) show a composition bias toward polar residues.

As to quaternary structure, interacts with NOD2.

The protein localises to the mitochondrion. This is an uncharacterized protein from Homo sapiens (Human).